The chain runs to 737 residues: DNA topoisomerase 4 subunit A (737 aa).

Positions 32–496 (LPDVRDGLKP…SFEEVTLTNQ (465 aa)) constitute a Topo IIA-type catalytic domain. Y120 (O-(5'-phospho-DNA)-tyrosine intermediate) is an active-site residue.

This sequence belongs to the type II topoisomerase GyrA/ParC subunit family. ParC type 1 subfamily. In terms of assembly, heterotetramer composed of ParC and ParE.

It localises to the cell membrane. The catalysed reaction is ATP-dependent breakage, passage and rejoining of double-stranded DNA.. Functionally, topoisomerase IV is essential for chromosome segregation. It relaxes supercoiled DNA. Performs the decatenation events required during the replication of a circular DNA molecule. This chain is DNA topoisomerase 4 subunit A, found in Rickettsia felis (strain ATCC VR-1525 / URRWXCal2) (Rickettsia azadi).